The primary structure comprises 120 residues: Large ribosomal subunit protein bL20 (120 aa).

It belongs to the bacterial ribosomal protein bL20 family.

Functionally, binds directly to 23S ribosomal RNA and is necessary for the in vitro assembly process of the 50S ribosomal subunit. It is not involved in the protein synthesizing functions of that subunit. This chain is Large ribosomal subunit protein bL20, found in Chlamydia abortus (strain DSM 27085 / S26/3) (Chlamydophila abortus).